The chain runs to 549 residues: Tegument protein (549 aa).

Disordered regions lie at residues 50-92, 353-391, and 523-542; these read KKKA…TASP, ETGD…CSSY, and TPIK…TRSP. Composition is skewed to polar residues over residues 75–84 and 356–369; these read PQALSVPSLS and DCSS…QTHR. The segment covering 523-534 has biased composition (low complexity); that stretch reads TPIKTTSSSSPR.

This viral structural protein may have important functions, such as protein kinase activity, DNA binding, and possible transcriptional activation of immediate-early genes. The chain is Tegument protein from Homo sapiens (Human).